An 859-amino-acid polypeptide reads, in one-letter code: MSNSQWVPVSLNEYLAHLPMSDEQRAELASCTTFAELHERLSAQPVTDPAEAAQASVGRRLTLSADDLEDAEMLGVDASGRLCLKATPPIRRTKVVPEPWRTNILVRGWRRLTGKSNPPKPDHSDLPRDLPKSRWRTVGSIRRYILLILMLGQTIVAGSYMKGILPYQGWSLVSLDEITRQTFVQTALQVLPYALQTSILLLFGILFCWVSAGFWTALMGFLELLTGRDKYRISGASAGNEPIEAGARTALVMPICNEDVPRVFAGLRATFESVAATGNLDRFDFFVLSDTNETDIAVAEQQAWLDVCRETKGFGSIFYRRRRRRVKRKSGNLDDFCRRWGGEYRYMVVLDADSVMSGECLTSLVRLMEATPDAGIIQTAPRASGMDTLYARMQQFATRVYGPLFTAGLHFWQLGESHYWGHNAIIRMKPFIEHCALAPLPGKGAFAGAILSHDFVEAALMRRAGWGVWIAYDLPGSYEELPPNLLDELKRDRRWCHGNLMNFRLFLVKGMHPVHRAVFLTGVMSYLSAPLWFFFLVLSTALLAVNTLMEPTYFLEPRQLYPLWPQWHPERAVALFSTTIVLLFLPKLLSVILIWAKGAKGFGGKFKVTVSMLLEMLFSVLLAPVRMLFHTRFVLAAFLGWAATWNSPQRDDDSTPWLEAVKRHGPQTLLGACWALLVFWLNPSFLWWLAPIVVSLMLSIPVSVISSRTNLGLKARDEKFFLIPEEFEPPQELVSTDQYTHENRWHALKQGFIRAVVDPRQNALACALATSRHRQAQPIEVVRMERVDHALKVGPAKLDNQHRLMLLSDPVALGRLHERVWSEGHEEWLAAWRASIEADPHAPLLPLQPVVKAPEPVLV.

Helical transmembrane passes span 144 to 166 (YILL…GILP), 200 to 222 (LLLF…MGFL), 523 to 545 (VMSY…LLAV), 573 to 595 (VALF…ILIW), 608 to 630 (VTVS…MLFH), and 684 to 706 (SFLW…SVIS).

It belongs to the glycosyltransferase 2 family. OpgH subfamily.

Its subcellular location is the cell inner membrane. Its pathway is glycan metabolism; osmoregulated periplasmic glucan (OPG) biosynthesis. Involved in the biosynthesis of osmoregulated periplasmic glucans (OPGs). The protein is Glucans biosynthesis glucosyltransferase H of Pseudomonas syringae pv. tomato (strain ATCC BAA-871 / DC3000).